The following is a 1021-amino-acid chain: Sodium/potassium-transporting ATPase subunit alpha-1 (1021 aa).

Positions 1–5 (MGKGV) are excised as a propeptide. Residues 1–11 (MGKGVGRDKYE) show a composition bias toward basic and acidic residues. Residues 1 to 36 (MGKGVGRDKYEPAAVSEHGDKKKAKKERDMDELKKE) are disordered. Over 6–85 (GRDKYEPAAV…NALTPPPTTP (80 aa)) the chain is Cytoplasmic. Lysine 9 is modified (N6-acetyllysine). A Phosphotyrosine modification is found at tyrosine 10. At serine 16 the chain carries Phosphoserine; by PKC. Lysine 21 is subject to N6-acetyllysine. The span at 26–36 (KERDMDELKKE) shows a compositional bias: basic and acidic residues. A phosphoserine mark is found at serine 38 and serine 45. The interval 80 to 82 (PPP) is phosphoinositide-3 kinase binding. The helical transmembrane segment at 86-106 (EWVKFCRQLFGGFSMLLWIGA) threads the bilayer. Residues 107–129 (VLCFLAYGIQAATEEEPQNDNLY) lie on the Extracellular side of the membrane. The chain crosses the membrane as a helical span at residues 130-150 (LGVVLSAVVIITGCFSYYQEA). At 151–286 (KSSKIMESFK…GGQTPIAAEI (136 aa)) the chain is on the cytoplasmic side. The residue at position 226 (serine 226) is a Phosphoserine. Tyrosine 258 bears the Phosphotyrosine mark. Residues 287–306 (EHFIHIITGVAVFLGVSFFI) traverse the membrane as a helical segment. Over 307–318 (LSLILEYTWLEA) the chain is Extracellular. Residues 319–336 (VIFLIGIIVANVPEGLLA) form a helical membrane-spanning segment. Residues 337-770 (TVTVCLTLTA…EEGRLIFDNL (434 aa)) are Cytoplasmic-facing. Residue aspartate 374 is the 4-aspartylphosphate intermediate of the active site. 2 positions are modified to phosphoserine: serine 450 and serine 482. An ATP-binding site is contributed by lysine 485. The residue at position 540 (tyrosine 540) is a Phosphotyrosine. The segment at 594–715 (RAAVPDAVGK…QGAIVAVTGD (122 aa)) is mediates interaction with SCN7A. Serine 666 carries the post-translational modification Phosphoserine. Residues aspartate 715 and aspartate 719 each contribute to the Mg(2+) site. A helical membrane pass occupies residues 771–790 (KKSIAYTLTSNIPEITPFLI). At 791-800 (FIIANIPLPL) the chain is on the extracellular side. A helical transmembrane segment spans residues 801-821 (GTVTILCIDLGTDMVPAISLA). At 822–841 (YEQAESDIMKRQPRNPQTDK) the chain is on the cytoplasmic side. Residues 842 to 864 (LVNERLISMAYGQIGMIQALGGF) form a helical membrane-spanning segment. At 865 to 916 (FTYFVIMAENGFLPNHLLGIRVTWDDRWINDVEDSYGQQWTYEQRKIVEFTC) the chain is on the extracellular side. Residues 917 to 936 (HTAFFVSIVVVQWADLVICK) form a helical membrane-spanning segment. Residues 937-949 (TRRNSVFQQGMKN) are Cytoplasmic-facing. Serine 941 carries the post-translational modification Phosphoserine; by PKA. A helical transmembrane segment spans residues 950–968 (KILIFGLFEETALAAFLSY). Over 969–983 (CPGMGVALRMYPLKP) the chain is Extracellular. The chain crosses the membrane as a helical span at residues 984–1004 (TWWFCAFPYSLLIFVYDEVRK). The Cytoplasmic segment spans residues 1005 to 1021 (LIIRRRPGGWVEKETYY).

It belongs to the cation transport ATPase (P-type) (TC 3.A.3) family. Type IIC subfamily. As to quaternary structure, the sodium/potassium-transporting ATPase is composed of a catalytic alpha subunit, an auxiliary non-catalytic beta subunit and an additional regulatory subunit. Interacts with regulatory subunit FXYD1. Interacts with regulatory subunit FXYD3. Interacts with SIK1. Interacts with SLC35G1 and STIM1. Interacts with CLN3; this interaction regulates the sodium/potassium-transporting ATPase complex localization at the plasma membrane. Interacts with SCN7A; activates ATP1A1 P-type sodium:potassium-exchanging transporter activity which indirectly signals to nearby neurons to regulate sodium homeostasis. In terms of processing, phosphorylation on Tyr-10 modulates pumping activity. Phosphorylation of Ser-941 by PKA modulates the response of ATP1A1 to PKC. Dephosphorylation by protein phosphatase 2A (PP2A) following increases in intracellular sodium, leading to increase catalytic activity.

It is found in the cell membrane. It localises to the basolateral cell membrane. The protein resides in the sarcolemma. Its subcellular location is the cell projection. The protein localises to the axon. It is found in the melanosome. It carries out the reaction K(+)(out) + Na(+)(in) + ATP + H2O = K(+)(in) + Na(+)(out) + ADP + phosphate + H(+). Specifically inhibited by cardiac glycosides such as digoxin or ouabain. This is the catalytic component of the active enzyme, which catalyzes the hydrolysis of ATP coupled with the exchange of sodium and potassium ions across the plasma membrane. This action creates the electrochemical gradient of sodium and potassium ions, providing the energy for active transport of various nutrients. Could also be part of an osmosensory signaling pathway that senses body-fluid sodium levels and controls salt intake behavior as well as voluntary water intake to regulate sodium homeostasis. The chain is Sodium/potassium-transporting ATPase subunit alpha-1 (ATP1A1) from Ovis aries (Sheep).